The following is a 404-amino-acid chain: CD209 antigen (404 aa).

The Cytoplasmic portion of the chain corresponds to 1 to 37; that stretch reads MSDSKEPRLQQLDLLEEEQLGGVGFRQTRGYKSLAGC. 3 consecutive short sequence motifs (endocytosis signal) follow at residues 14–15, 16–18, and 31–34; these read LL, EEE, and YKSL. The helical; Signal-anchor for type II membrane protein transmembrane segment at 38 to 58 threads the bilayer; it reads LGHGPLVLQLLSFTLLAGLLV. The Extracellular segment spans residues 59–404; it reads QVSKVPSSLS…APTTPNPPPA (346 aa). N-linked (GlcNAc...) asparagine glycosylation occurs at N80. 7 consecutive repeat copies span residues 96–118, 119–141, 142–164, 165–187, 188–210, 211–233, and 234–257. The 7 X approximate tandem repeats stretch occupies residues 96–257; it reads KQQEIYQELT…AVERLCHPCP (162 aa). Cystine bridges form between C256/C267, C284/C377, and C356/C369. The region spanning 263-378 is the C-type lectin domain; the sequence is FQGNCYFMSN…CNLAKFWICK (116 aa). Positions 347, 349, 351, 354, 365, and 366 each coordinate Ca(2+). A disordered region spans residues 382-404; it reads ASCSGDEERLLSPAPTTPNPPPA.

In terms of assembly, homotetramer. Interacts with C1QBP; the interaction is indicative for a C1q:C1QBP:CD209 signaling complex. Interacts with ICAM2 and ICAM3 by binding to mannose-like carbohydrates. Interacts (via C-type lectin domain) with CEACAM1 (via Lewis X moieties); this interaction is regulated by the glycosylation pattern of CEACAM1 on cell types and regulates contact between dendritic cells and neutrophils.

It localises to the membrane. Its function is as follows. Pathogen-recognition receptor expressed on the surface of immature dendritic cells (DCs) and involved in initiation of primary immune response. Thought to mediate the endocytosis of pathogens which are subsequently degraded in lysosomal compartments. The receptor returns to the cell membrane surface and the pathogen-derived antigens are presented to resting T-cells via MHC class II proteins to initiate the adaptive immune response. Probably recognizes in a calcium-dependent manner high mannose N-linked oligosaccharides in a variety of pathogen antigens. In terms of biological role, on DCs it is a high affinity receptor for ICAM2 and ICAM3 by binding to mannose-like carbohydrates. May act as a DC rolling receptor that mediates transendothelial migration of DC presursors from blood to tissues by binding endothelial ICAM2. Seems to regulate DC-induced T-cell proliferation by binding to ICAM3 on T-cells in the immunological synapse formed between DC and T-cells. This is CD209 antigen (CD209) from Macaca mulatta (Rhesus macaque).